The following is a 171-amino-acid chain: S-ribosylhomocysteine lyase (171 aa).

Residues His54, His58, and Cys128 each coordinate Fe cation.

This sequence belongs to the LuxS family. In terms of assembly, homodimer. Requires Fe cation as cofactor.

It carries out the reaction S-(5-deoxy-D-ribos-5-yl)-L-homocysteine = (S)-4,5-dihydroxypentane-2,3-dione + L-homocysteine. Functionally, involved in the synthesis of autoinducer 2 (AI-2) which is secreted by bacteria and is used to communicate both the cell density and the metabolic potential of the environment. The regulation of gene expression in response to changes in cell density is called quorum sensing. Catalyzes the transformation of S-ribosylhomocysteine (RHC) to homocysteine (HC) and 4,5-dihydroxy-2,3-pentadione (DPD). The chain is S-ribosylhomocysteine lyase from Shigella boydii serotype 4 (strain Sb227).